The sequence spans 440 residues: Trigger factor (440 aa).

The 94-residue stretch at 160–253 (KDTVIGDALR…VTEVKRLELP (94 aa)) folds into the PPIase FKBP-type domain.

The protein belongs to the FKBP-type PPIase family. Tig subfamily.

The protein resides in the cytoplasm. The catalysed reaction is [protein]-peptidylproline (omega=180) = [protein]-peptidylproline (omega=0). Functionally, involved in protein export. Acts as a chaperone by maintaining the newly synthesized protein in an open conformation. Functions as a peptidyl-prolyl cis-trans isomerase. The polypeptide is Trigger factor (Chlorobium chlorochromatii (strain CaD3)).